Here is a 340-residue protein sequence, read N- to C-terminus: Phospho-N-acetylmuramoyl-pentapeptide-transferase (340 aa).

9 consecutive transmembrane segments (helical) span residues Val24–Leu44, Thr69–Trp89, Ala95–Ile115, Leu129–Pro149, Gly156–Gly176, Ala196–Phe216, Leu235–Leu255, Trp260–Val280, and Val316–His336.

The protein belongs to the glycosyltransferase 4 family. MraY subfamily. Mg(2+) is required as a cofactor.

Its subcellular location is the cell inner membrane. The catalysed reaction is UDP-N-acetyl-alpha-D-muramoyl-L-alanyl-gamma-D-glutamyl-meso-2,6-diaminopimeloyl-D-alanyl-D-alanine + di-trans,octa-cis-undecaprenyl phosphate = di-trans,octa-cis-undecaprenyl diphospho-N-acetyl-alpha-D-muramoyl-L-alanyl-D-glutamyl-meso-2,6-diaminopimeloyl-D-alanyl-D-alanine + UMP. Its pathway is cell wall biogenesis; peptidoglycan biosynthesis. Functionally, catalyzes the initial step of the lipid cycle reactions in the biosynthesis of the cell wall peptidoglycan: transfers peptidoglycan precursor phospho-MurNAc-pentapeptide from UDP-MurNAc-pentapeptide onto the lipid carrier undecaprenyl phosphate, yielding undecaprenyl-pyrophosphoryl-MurNAc-pentapeptide, known as lipid I. This Synechococcus sp. (strain JA-3-3Ab) (Cyanobacteria bacterium Yellowstone A-Prime) protein is Phospho-N-acetylmuramoyl-pentapeptide-transferase.